Here is a 194-residue protein sequence, read N- to C-terminus: Thymidine kinase (194 aa).

Residues 15–22 (GCMFSGKT) and 88–91 (DELH) contribute to the ATP site. The active-site Proton acceptor is the glutamate 89. Residues cysteine 148, cysteine 151, cysteine 186, and cysteine 189 each contribute to the Zn(2+) site.

The protein belongs to the thymidine kinase family. As to quaternary structure, homotetramer.

The protein localises to the cytoplasm. It catalyses the reaction thymidine + ATP = dTMP + ADP + H(+). This chain is Thymidine kinase, found in Roseiflexus castenholzii (strain DSM 13941 / HLO8).